The sequence spans 508 residues: Pyruvate kinase (508 aa).

Substrate is bound at residue Arg56. K(+)-binding residues include Asn58, Ser60, Asp90, and Thr91. 58-61 (NFSH) contacts ATP. 2 residues coordinate ATP: Arg97 and Lys185. Glu251 contacts Mg(2+). Substrate-binding residues include Gly274, Asp275, and Thr307. Residue Asp275 coordinates Mg(2+).

Belongs to the pyruvate kinase family. Homotetramer. The cofactor is Mg(2+). K(+) serves as cofactor.

The catalysed reaction is pyruvate + ATP = phosphoenolpyruvate + ADP + H(+). It functions in the pathway carbohydrate degradation; glycolysis; pyruvate from D-glyceraldehyde 3-phosphate: step 5/5. With respect to regulation, regulated by phosphoenolpyruvate substrate and is allosterically activated by ribose-5-phosphate, AMP and other nucleoside monophosphates but not by fructose-1,6-bisphosphate. In Mycoplasma genitalium (strain ATCC 33530 / DSM 19775 / NCTC 10195 / G37) (Mycoplasmoides genitalium), this protein is Pyruvate kinase (pyk).